We begin with the raw amino-acid sequence, 501 residues long: Cystine/glutamate transporter (501 aa).

Residues 1-43 (MVRKPVVSTISKGGYLQGNVNGRLPSLGNKEPPGQEKVQLKRK) are Cytoplasmic-facing. Phosphoserine is present on Ser26. Residues 44 to 64 (VTLLRGVSIIIGTIIGAGIFI) traverse the membrane as a helical segment. Residues 65–74 (SPKGVLQNTG) are Extracellular-facing. Residues 75 to 95 (SVGMSLTIWTVCGVLSLFGAL) traverse the membrane as a helical segment. The Cytoplasmic portion of the chain corresponds to 96 to 101 (SYAELG). Residues 102-116 (TTIKKSGGHYTYILE) lie within the membrane without spanning it. Residues 117–130 (VFGPLPAFVRVWVE) are Cytoplasmic-facing. The chain crosses the membrane as a helical span at residues 131–150 (LLIIRPAATAVISLAFGRYI). Arg135 contacts L-glutamate. At 151 to 163 (LEPFFIQCEIPEL) the chain is on the extracellular side. A helical transmembrane segment spans residues 164–179 (AIKLITAVGITVVMVL). The Cytoplasmic portion of the chain corresponds to 180–193 (NSMSVSWSARIQIF). Residues 194 to 210 (LTFCKLTAILIIIVPGV) form a helical membrane-spanning segment. Residues 211-234 (MQLIKGQTQNFKDAFSGRDSSITR) lie on the Extracellular side of the membrane. Residues 235–255 (LPLAFYYGMYAYAGWFYLNFV) form a helical membrane-spanning segment. Position 244 (Tyr244) interacts with L-glutamate. Over 256 to 265 (TEEVENPEKT) the chain is Cytoplasmic. Residues 266–286 (IPLAICISMAIVTIGYVLTNV) traverse the membrane as a helical segment. Topologically, residues 287–317 (AYFTTINAEELLLSNAVAVTFSERLLGNFSL) are extracellular. The N-linked (GlcNAc...) asparagine glycan is linked to Asn314. Residues 318 to 338 (AVPIFVALSCFGSMNGGVFAV) form a helical membrane-spanning segment. At 339-364 (SRLFYVASREGHLPEILSMIHVRKHT) the chain is on the cytoplasmic side. The helical transmembrane segment at 365 to 385 (PLPAVIVLHPLTMIMLFSGDL) threads the bilayer. Residues 386 to 387 (DS) lie on the Extracellular side of the membrane. Residues 388–408 (LLNFLSFARWLFIGLAVAGLI) traverse the membrane as a helical segment. Topologically, residues 409–422 (YLRYKCPDMHRPFK) are cytoplasmic. The chain crosses the membrane as a helical span at residues 423 to 443 (VPLFIPALFSFTCLFMVALSL). Over 444-449 (YSDPFS) the chain is Extracellular. Residues 450–470 (TGIGSVITLTGVPAYYLFIIW) traverse the membrane as a helical segment. The Cytoplasmic segment spans residues 471–501 (DKKPRWFRIMSEKITRTLQIILEVVPEEDKL).

Belongs to the amino acid-polyamine-organocation (APC) superfamily. L-type amino acid transporter (LAT) (TC 2.A.3.8) family. As to quaternary structure, disulfide-linked heterodimer with the amino acid transport protein SLC3A2/4F2hc; this interaction mediates cell membrane localization.

Its subcellular location is the cell membrane. It is found in the cell projection. It localises to the microvillus membrane. The enzyme catalyses L-cystine(out) + L-glutamate(in) = L-cystine(in) + L-glutamate(out). It catalyses the reaction an L-alpha-amino acid(in) + L-kynurenine(out) = an L-alpha-amino acid(out) + L-kynurenine(in). The catalysed reaction is N-acetyl-L-cysteine(out) + L-glutamate(in) = N-acetyl-L-cysteine(in) + L-glutamate(out). Heterodimer with SLC3A2, that functions as an antiporter by mediating the exchange of extracellular anionic L-cystine and intracellular L-glutamate across the cellular plasma membrane. Provides L-cystine for the maintenance of the redox balance between extracellular L-cystine and L-cysteine and for the maintenance of the intracellular levels of glutathione that is essential for cells protection from oxidative stress. The transport is sodium-independent, electroneutral with a stoichiometry of 1:1, and is drove by the high intracellular concentration of L-glutamate and the intracellular reduction of L-cystine. In addition, mediates the import of L-kynurenine leading to anti-ferroptotic signaling propagation required to maintain L-cystine and glutathione homeostasis. Moreover, mediates N-acetyl-L-cysteine uptake into the placenta leading to subsequently down-regulation of pathways associated with oxidative stress, inflammation and apoptosis. In vitro can also transport L-aspartate. May participate in astrocyte and meningeal cell proliferation during development and can provide neuroprotection by promoting glutathione synthesis and delivery from non-neuronal cells such as astrocytes and meningeal cells to immature neurons. Controls the production of pheomelanin pigment directly. The chain is Cystine/glutamate transporter from Pongo abelii (Sumatran orangutan).